The following is a 421-amino-acid chain: MYDAVTRPSPPADASAWPRRITQAVKVGNVIVGGGHPVVVQSMTNTDTADIAGSVKQVAELWRAGSEMVRLTVNNAESAAAIPRIVEKLRMMGIEVPLIGDFHYNGHQLLTAEPACAEALAKYRINPGNVGFGKKKDLQFAQLIEFAIQYDKPVRIGANWGSLDQALAAQLMDENSKRETPWDAGRVLREALIRSAVDSAERAVELGLPRERIILSAKVSGVQELIAVYRDMAARCDFALHLGLTEAGIGSKGIVASAAALSVLLQEGIGDTIRISLTPEPGQSRTQEVIVAQELLQTTGQRAFTPLVTACPGCGRTTSEFFQELAGVVQNHVRAKMPEWKISNPGAENMTLAVMGCVVNGPGESRHANIGISLPGTGEAPSAPVFVDGEKTVTLRGENIAYEFIDLIDQYVERTYVRRAG.

[4Fe-4S] cluster contacts are provided by Cys-311, Cys-314, Cys-357, and Glu-364.

It belongs to the IspG family. The cofactor is [4Fe-4S] cluster.

The catalysed reaction is (2E)-4-hydroxy-3-methylbut-2-enyl diphosphate + oxidized [flavodoxin] + H2O + 2 H(+) = 2-C-methyl-D-erythritol 2,4-cyclic diphosphate + reduced [flavodoxin]. Its pathway is isoprenoid biosynthesis; isopentenyl diphosphate biosynthesis via DXP pathway; isopentenyl diphosphate from 1-deoxy-D-xylulose 5-phosphate: step 5/6. Its function is as follows. Converts 2C-methyl-D-erythritol 2,4-cyclodiphosphate (ME-2,4cPP) into 1-hydroxy-2-methyl-2-(E)-butenyl 4-diphosphate. This Xanthomonas campestris pv. campestris (strain 8004) protein is 4-hydroxy-3-methylbut-2-en-1-yl diphosphate synthase (flavodoxin).